Reading from the N-terminus, the 484-residue chain is SPI-2 type 3 secretion system translocon protein SctE (484 aa).

Transmembrane regions (helical) follow at residues 85–105 (FLQTNPAVLSMMMTSLILNVF) and 152–172 (GIFGAIFDWITGIFETVIGAL). 2 coiled-coil regions span residues 107-152 (NNAQ…RKAG) and 413-457 (NTEK…LYKG).

This sequence belongs to the SctE/SipB/YopB family. The core secretion machinery of the T3SS is composed of approximately 20 different proteins, including cytoplasmic components, a base, an export apparatus and a needle. This subunit is involved in the formation of a pore, called the translocon, in host membrane. May form a complex with SseB and SseD/SctB2. SseB is required for correct localization of SseC/SctE2 on the bacterial cell surface.

Its subcellular location is the secreted. It localises to the cell surface. The protein localises to the host membrane. Component of the type III secretion system 2 (SPI-2 T3SS), also called injectisome, which is used to inject bacterial effector proteins into eukaryotic host cells. SseC/SctE2 and SseD/SctB2 are inserted into the host membrane where they form a pore and allow the translocation of effector proteins into the cytosol of target cells. Functionally, required for the translocation of SPI-2 effector proteins. Required for systemic Salmonella infection of the mouse. Essential for SpvB-induced actin depolymerization in the host cell cytoplasm. This chain is SPI-2 type 3 secretion system translocon protein SctE, found in Salmonella typhimurium (strain LT2 / SGSC1412 / ATCC 700720).